The primary structure comprises 205 residues: Phosphoserine phosphatase ThrH (205 aa).

Residue Asp7 is the Nucleophile of the active site. Residues Asp7 and Glu9 each coordinate Mg(2+). The Proton donor role is filled by Glu9. Residues Glu15, Arg46, 90-91 (SD), and Lys133 each bind substrate. A Mg(2+)-binding site is contributed by Asp152. Asn155 contributes to the substrate binding site.

The protein belongs to the thrH family. The cofactor is Mg(2+).

The catalysed reaction is O-phospho-L-serine + H2O = L-serine + phosphate. It catalyses the reaction O-phospho-D-serine + H2O = D-serine + phosphate. It participates in amino-acid biosynthesis; L-serine biosynthesis; L-serine from 3-phospho-D-glycerate: step 3/3. Phosphoserine phosphatase that mediates dephosphorylation of phosphoserine in the serine biosynthesis pathway. Also able to dephosphorylate other substrates such as phospho-L(or D)-threonine, with lower activity. Shows phosphoserine:homoserine phosphotransferase activity by transferring the phosphoryl group to homoserine using phosphoserine as the phosphoryl group donor. This chain is Phosphoserine phosphatase ThrH (thrH), found in Pseudomonas aeruginosa (strain ATCC 15692 / DSM 22644 / CIP 104116 / JCM 14847 / LMG 12228 / 1C / PRS 101 / PAO1).